Reading from the N-terminus, the 283-residue chain is Putative cytochrome b-c1 complex subunit Rieske-like protein 1 (283 aa).

The helical transmembrane segment at 116-149 (TEARKGFSYLVTGVTTVGVAYAAKNAVTQFVSSM) threads the bilayer. The Rieske domain maps to 196–281 (EAAVELSQLR…YEFTSDDMVI (86 aa)). C226, H228, C245, and H248 together coordinate [2Fe-2S] cluster. Residues C231 and C247 are joined by a disulfide bond.

It belongs to the Rieske iron-sulfur protein family. The cofactor is [2Fe-2S] cluster.

The protein resides in the membrane. The polypeptide is Putative cytochrome b-c1 complex subunit Rieske-like protein 1 (UQCRFS1P1) (Homo sapiens (Human)).